Consider the following 247-residue polypeptide: tRNA (guanine-N(1)-)-methyltransferase (247 aa).

S-adenosyl-L-methionine contacts are provided by residues Gly-112 and 132–137; that span reads IGDFVL.

This sequence belongs to the RNA methyltransferase TrmD family. Homodimer.

Its subcellular location is the cytoplasm. It catalyses the reaction guanosine(37) in tRNA + S-adenosyl-L-methionine = N(1)-methylguanosine(37) in tRNA + S-adenosyl-L-homocysteine + H(+). Its function is as follows. Specifically methylates guanosine-37 in various tRNAs. In Geotalea uraniireducens (strain Rf4) (Geobacter uraniireducens), this protein is tRNA (guanine-N(1)-)-methyltransferase.